A 192-amino-acid polypeptide reads, in one-letter code: DNA dC-&gt;dU-editing enzyme APOBEC-3Ca (192 aa).

The region spanning 15 to 141 (IDPNTFRFHF…PNYQEGLCKL (127 aa)) is the CMP/dCMP-type deaminase domain. Zn(2+) is bound at residue histidine 69. Glutamate 71 acts as the Proton donor in catalysis. 2 residues coordinate Zn(2+): cysteine 100 and cysteine 103.

Belongs to the cytidine and deoxycytidylate deaminase family. As to quaternary structure, (Microbial infection) Interacts with feline foamy virus protein Bet. This interaction does not induce APOBEC3Ca degradation but prevents its dimerization and incorporation into the virion. Requires Zn(2+) as cofactor.

It is found in the nucleus. Its subcellular location is the cytoplasm. The catalysed reaction is a 2'-deoxycytidine in single-stranded DNA + H2O + H(+) = a 2'-deoxyuridine in single-stranded DNA + NH4(+). DNA deaminase (cytidine deaminase) which acts as an inhibitor of retrovirus replication and retrotransposon mobility via deaminase-dependent and -independent mechanisms. Selectively targets single-stranded DNA and does not deaminate double-stranded DNA or single- or double-stranded RNA. Does not reduce infectivity of foamy feline virus, feline immunodeficiency virus or feline leukemia virus. This Felis catus (Cat) protein is DNA dC-&gt;dU-editing enzyme APOBEC-3Ca.